The primary structure comprises 402 residues: MDTMANSILGQEITFLKLDTRVIKNFDKVLTNNIEVVETSLWSVVRKNALKKGAAKALQACASSVLHKRSDYEFLTTGNVLRKKIRLPRLFGNKVISAAYSWIKRVQAALLLDYLKEHLSQYDWDQLIVVVFNGSNYPESVLAEASKGFKRVFVEDGFFPGTLQIDPVGINAANSVPRCSAFYKSGRDFSEGGLPTAVTNRSSKRKFTPVDLAPGFVFVPFQVPSDMQVTLHSPWVKDMYNFYDIVVNAAEQNPEEMFVIKEHPRFKRSVIGSRPPHPRVKFANGNITSELISNARTVVTINSTVGIEALLLGKQVITLGDSCYNIQDLVLRGNDMGRLNAALALRGWLPDDELRRQFLGFLWNYYLVKGSFTEPPTALASRILDCFELDSEVRGAIANLNN.

This chain is Protein FixF (fixF), found in Sinorhizobium fredii (strain NBRC 101917 / NGR234).